Consider the following 432-residue polypeptide: Trigger factor (432 aa).

The 86-residue stretch at 161 to 246 (EDRVTIDFTG…LKKVEERELP (86 aa)) folds into the PPIase FKBP-type domain.

This sequence belongs to the FKBP-type PPIase family. Tig subfamily.

It is found in the cytoplasm. The catalysed reaction is [protein]-peptidylproline (omega=180) = [protein]-peptidylproline (omega=0). In terms of biological role, involved in protein export. Acts as a chaperone by maintaining the newly synthesized protein in an open conformation. Functions as a peptidyl-prolyl cis-trans isomerase. The protein is Trigger factor of Salmonella typhi.